Consider the following 110-residue polypeptide: UPF0122 protein lwe1821 (110 aa).

It belongs to the UPF0122 family.

Might take part in the signal recognition particle (SRP) pathway. This is inferred from the conservation of its genetic proximity to ftsY/ffh. May be a regulatory protein. The polypeptide is UPF0122 protein lwe1821 (Listeria welshimeri serovar 6b (strain ATCC 35897 / DSM 20650 / CCUG 15529 / CIP 8149 / NCTC 11857 / SLCC 5334 / V8)).